The primary structure comprises 518 residues: Glutamate--cysteine ligase (518 aa).

The protein belongs to the glutamate--cysteine ligase type 1 family. Type 1 subfamily.

The enzyme catalyses L-cysteine + L-glutamate + ATP = gamma-L-glutamyl-L-cysteine + ADP + phosphate + H(+). Its pathway is sulfur metabolism; glutathione biosynthesis; glutathione from L-cysteine and L-glutamate: step 1/2. This Shigella boydii serotype 4 (strain Sb227) protein is Glutamate--cysteine ligase.